Consider the following 357-residue polypeptide: Putative F-box/kelch-repeat protein At5g38680 (357 aa).

The 48-residue stretch at 14 to 61 folds into the F-box domain; sequence NSNPSLPDALIISCIARVSRLYYPILSFVSKSFRSLLASPELYKERSL. Kelch repeat units lie at residues 131–175, 177–224, 226–267, and 268–313; these read NIYN…VLDG, IYVA…SKSL, IDEK…YCEI, and ENVL…GGKK.

This chain is Putative F-box/kelch-repeat protein At5g38680, found in Arabidopsis thaliana (Mouse-ear cress).